The chain runs to 133 residues: MKDNIELAIFTPEKNIKIGEIKEVITEGLDGDLAILPNHVNMITYLKPTITKYIDLNGNKNNIFTSSGVLKVEDNKVYIICDASEKPEDIDIKRAENAKKRAEERLRNKKEIDVKRAELALFRSIARIKIKEL.

It belongs to the ATPase epsilon chain family. F-type ATPases have 2 components, CF(1) - the catalytic core - and CF(0) - the membrane proton channel. CF(1) has five subunits: alpha(3), beta(3), gamma(1), delta(1), epsilon(1). CF(0) has three main subunits: a, b and c.

Its subcellular location is the cell membrane. In terms of biological role, produces ATP from ADP in the presence of a proton gradient across the membrane. The chain is ATP synthase epsilon chain from Clostridium botulinum (strain Langeland / NCTC 10281 / Type F).